The chain runs to 118 residues: Ribonuclease P protein component (118 aa).

It belongs to the RnpA family. As to quaternary structure, consists of a catalytic RNA component (M1 or rnpB) and a protein subunit.

It carries out the reaction Endonucleolytic cleavage of RNA, removing 5'-extranucleotides from tRNA precursor.. Its function is as follows. RNaseP catalyzes the removal of the 5'-leader sequence from pre-tRNA to produce the mature 5'-terminus. It can also cleave other RNA substrates such as 4.5S RNA. The protein component plays an auxiliary but essential role in vivo by binding to the 5'-leader sequence and broadening the substrate specificity of the ribozyme. This is Ribonuclease P protein component from Vibrio campbellii (strain ATCC BAA-1116).